Reading from the N-terminus, the 152-residue chain is Ribonuclease H (152 aa).

The 142-residue stretch at 1–142 folds into the RNase H type-1 domain; sequence MDSKVVIYTD…ADKLAVQGRE (142 aa). Residues Asp10, Glu48, Asp70, and Asp134 each contribute to the Mg(2+) site.

This sequence belongs to the RNase H family. In terms of assembly, monomer. Mg(2+) serves as cofactor.

Its subcellular location is the cytoplasm. It catalyses the reaction Endonucleolytic cleavage to 5'-phosphomonoester.. Endonuclease that specifically degrades the RNA of RNA-DNA hybrids. This Rickettsia typhi (strain ATCC VR-144 / Wilmington) protein is Ribonuclease H.